The sequence spans 236 residues: Exotoxin type H (236 aa).

A signal peptide spans 1–32 (MRYNCRYSHIDKKIYSMIICLSFLLYSNVVQA).

This sequence belongs to the staphylococcal/streptococcal toxin family.

It is found in the secreted. Mitogenic for human peripheral blood lymphocytes. This is Exotoxin type H (speH) from Streptococcus pyogenes serotype M1.